Reading from the N-terminus, the 116-residue chain is POU domain, class 4, transcription factor 1 (116 aa).

The POU-specific domain maps to 1 to 54 (VTQADVGSALANLKIPGVGSLSQSTICRFESLTLSHNNMIALKPILQAWLEEAE). Residues 56–79 (AQREKMNKPELFNGGEKKRKRTSI) are disordered. The homeobox DNA-binding region spans 72-116 (KKRKRTSIAAPEKRSLEAYFAVQPRPSSEKIAAIAEKLDLKKNVV).

Belongs to the POU transcription factor family. Class-4 subfamily.

The protein resides in the nucleus. It is found in the cytoplasm. Multifunctional transcription factor with different regions mediating its different effects. Acts by binding (via its C-terminal domain) to sequences related to the consensus octamer motif 5'-ATGCAAAT-3' in the regulatory regions of its target genes. Regulates the expression of specific genes involved in differentiation and survival within a subset of neuronal lineages. It has been shown that activation of some of these genes requires its N-terminal domain, maybe through a neuronal-specific cofactor. The sequence is that of POU domain, class 4, transcription factor 1 (POU4F1) from Gallus gallus (Chicken).